Reading from the N-terminus, the 997-residue chain is Glutamate [NMDA] receptor subunit 1 (997 aa).

Residues 1–26 (MAVAGFVFCWPLLGLTIVLLVAPIDA) form the signal peptide. Topologically, residues 27-573 (AQRHTASDNP…TLVSFLQPFS (547 aa)) are extracellular. 7 N-linked (GlcNAc...) asparagine glycosylation sites follow: Asn-258, Asn-314, Asn-345, Asn-397, Asn-454, Asn-481, and Asn-501. Glycine-binding positions include 530-532 (PLT) and Arg-537. A helical membrane pass occupies residues 574 to 594 (NTLWILVMVSVHVVALVLYLL). Residues 595–651 (DRFSPFGRFKLSHSDSNEEKALNLSSAVWFAWGVLLNSGIGEGTPRSFSARVLGMVW) lie on the Cytoplasmic side of the membrane. A helical membrane pass occupies residues 652-672 (AGFAMIIVASYTANLAAFLVL). Residues 673 to 831 (ERPKTKLSGI…KTPNTLGLKN (159 aa)) lie on the Extracellular side of the membrane. An N-linked (GlcNAc...) asparagine glycan is attached at Asn-693. The glycine site is built by Ser-703 and Asp-747. Residues 832-852 (MAGVFILVGVGIAGGVGLIII) traverse the membrane as a helical segment. Topologically, residues 853 to 997 (EVIYKKHQVK…YTSDVSHLVV (145 aa)) are cytoplasmic. The segment at 970–997 (LGKTRPQQSVLPPRYSPGYTSDVSHLVV) is disordered. Residues 987–997 (GYTSDVSHLVV) are compositionally biased toward polar residues.

It belongs to the glutamate-gated ion channel (TC 1.A.10.1) family. Forms a heteromeric NMDA channel with Nmdar2.

It is found in the cell membrane. The protein localises to the postsynaptic cell membrane. It localises to the postsynaptic density. Functionally, NMDA receptor subtype of glutamate-gated ion channels with high calcium permeability and voltage-dependent sensitivity to magnesium. Mediated by glycine. This protein plays a key role in synaptic plasticity, synaptogenesis, excitotoxicity, memory acquisition and learning. It mediates neuronal functions in glutamate neurotransmission. Is involved in the cell surface targeting of NMDA receptors. Plays a role in associative learning and in long-term memory consolidation. This is Glutamate [NMDA] receptor subunit 1 from Drosophila yakuba (Fruit fly).